Consider the following 1576-residue polypeptide: Pentafunctional AROM polypeptide (1576 aa).

Residues methionine 1–aspartate 387 are 3-dehydroquinate synthase. NAD(+) contacts are provided by residues aspartate 49–asparagine 51, glutamate 86–lysine 89, glycine 117–valine 119, and aspartate 122. Residue arginine 133 participates in 7-phospho-2-dehydro-3-deoxy-D-arabino-heptonate binding. Threonine 142 to threonine 143 contacts NAD(+). 7-phospho-2-dehydro-3-deoxy-D-arabino-heptonate is bound by residues aspartate 149 and lysine 155. Residue lysine 164 participates in NAD(+) binding. Residue asparagine 165 coordinates 7-phospho-2-dehydro-3-deoxy-D-arabino-heptonate. NAD(+)-binding positions include phenylalanine 182 to threonine 185 and asparagine 193. Residue glutamate 197 participates in Zn(2+) binding. Residues glutamate 197–lysine 200 and lysine 253 contribute to the 7-phospho-2-dehydro-3-deoxy-D-arabino-heptonate site. Residue glutamate 263 is the Proton acceptor; for 3-dehydroquinate synthase activity of the active site. 7-phospho-2-dehydro-3-deoxy-D-arabino-heptonate-binding positions include arginine 267–asparagine 271 and histidine 274. Histidine 274 contributes to the Zn(2+) binding site. Histidine 278 (proton acceptor; for 3-dehydroquinate synthase activity) is an active-site residue. Histidine 290 and lysine 359 together coordinate 7-phospho-2-dehydro-3-deoxy-D-arabino-heptonate. Histidine 290 provides a ligand contact to Zn(2+). Residues valine 400–valine 841 form an EPSP synthase region. The active-site For EPSP synthase activity is the cysteine 823. The shikimate kinase stretch occupies residues aspartate 863 to serine 1055. Glycine 870–threonine 877 contributes to the ATP binding site. Residues leucine 1056–glutamate 1276 form a 3-dehydroquinase region. Histidine 1179 functions as the Proton acceptor; for 3-dehydroquinate dehydratase activity in the catalytic mechanism. Residue lysine 1207 is the Schiff-base intermediate with substrate; for 3-dehydroquinate dehydratase activity of the active site. Positions proline 1289–alanine 1576 are shikimate dehydrogenase.

This sequence in the N-terminal section; belongs to the sugar phosphate cyclases superfamily. Dehydroquinate synthase family. In the 2nd section; belongs to the EPSP synthase family. It in the 3rd section; belongs to the shikimate kinase family. The protein in the 4th section; belongs to the type-I 3-dehydroquinase family. This sequence in the C-terminal section; belongs to the shikimate dehydrogenase family. In terms of assembly, homodimer. Zn(2+) serves as cofactor.

It is found in the cytoplasm. It catalyses the reaction 7-phospho-2-dehydro-3-deoxy-D-arabino-heptonate = 3-dehydroquinate + phosphate. The catalysed reaction is 3-dehydroquinate = 3-dehydroshikimate + H2O. It carries out the reaction shikimate + NADP(+) = 3-dehydroshikimate + NADPH + H(+). The enzyme catalyses shikimate + ATP = 3-phosphoshikimate + ADP + H(+). It catalyses the reaction 3-phosphoshikimate + phosphoenolpyruvate = 5-O-(1-carboxyvinyl)-3-phosphoshikimate + phosphate. The protein operates within metabolic intermediate biosynthesis; chorismate biosynthesis; chorismate from D-erythrose 4-phosphate and phosphoenolpyruvate: step 2/7. Its pathway is metabolic intermediate biosynthesis; chorismate biosynthesis; chorismate from D-erythrose 4-phosphate and phosphoenolpyruvate: step 3/7. It functions in the pathway metabolic intermediate biosynthesis; chorismate biosynthesis; chorismate from D-erythrose 4-phosphate and phosphoenolpyruvate: step 4/7. It participates in metabolic intermediate biosynthesis; chorismate biosynthesis; chorismate from D-erythrose 4-phosphate and phosphoenolpyruvate: step 5/7. The protein operates within metabolic intermediate biosynthesis; chorismate biosynthesis; chorismate from D-erythrose 4-phosphate and phosphoenolpyruvate: step 6/7. Functionally, the AROM polypeptide catalyzes 5 consecutive enzymatic reactions in prechorismate polyaromatic amino acid biosynthesis. This is Pentafunctional AROM polypeptide from Sclerotinia sclerotiorum (strain ATCC 18683 / 1980 / Ss-1) (White mold).